The sequence spans 150 residues: Retinal rod rhodopsin-sensitive cGMP 3',5'-cyclic phosphodiesterase subunit delta (150 aa).

Positions 144-150 (RVRLFYV) are required for association with membranes.

The protein belongs to the PDE6D/unc-119 family. Interacts with the prenylated catalytic subunits of PDE6, an oligomer composed of two catalytic chains (PDE6A and PDE6B) and two inhibitory chains (gamma); has no effect on enzyme activity but promotes the release of the prenylated enzyme from cell membrane. Interacts with prenylated GRK1 and GRK7. Interacts with prenylated Ras family members, including RAP2A and RAP2C. Interacts with prenylated RHEB and NRAS. Interacts with prenylated HRAS and KRAS. Interacts with RAB13 (prenylated form); dissociates RAB13 from membranes. Interacts with prenylated INPP5E. Interacts with RAB28 (prenylated form); the interaction promotes RAB28 delivery to the photoreceptor outer segments. Interacts with RPGR. Interacts with ARL2. Interacts with ARL3; the interaction occurs specifically with the GTP-bound form of ARL3. Interaction with ARL2 and ARL3 promotes release of farnesylated cargo proteins. In terms of tissue distribution, widely expressed. Detected in various tissues including spleen, prostate gland, testis, ovary, small intestine, colon, retina, and peripheral blood.

It localises to the cytoplasm. The protein localises to the cytosol. The protein resides in the cytoplasmic vesicle membrane. Its subcellular location is the cytoskeleton. It is found in the cilium basal body. Promotes the release of prenylated target proteins from cellular membranes. Modulates the activity of prenylated or palmitoylated Ras family members by regulating their subcellular location. Required for normal ciliary targeting of farnesylated target proteins, such as INPP5E. Required for RAB28 localization to the cone cell outer segments in the retina. Modulates the subcellular location of target proteins by acting as a GTP specific dissociation inhibitor (GDI). Increases the affinity of ARL3 for GTP by several orders of magnitude. Stabilizes ARL3-GTP by decreasing the nucleotide dissociation rate. The polypeptide is Retinal rod rhodopsin-sensitive cGMP 3',5'-cyclic phosphodiesterase subunit delta (PDE6D) (Homo sapiens (Human)).